A 519-amino-acid polypeptide reads, in one-letter code: Cytochrome P450 4A11 (519 aa).

Residues 1 to 4 constitute a propeptide that is removed on maturation; that stretch reads MSVS. Heme is bound at residue Glu321. Ser440 carries the phosphoserine modification. Residue Cys457 coordinates heme.

The protein belongs to the cytochrome P450 family. Heme is required as a cofactor. In terms of tissue distribution, expressed in liver. Expressed in S2 and S3 segments of proximal tubules in cortex and outer medulla of kidney.

The protein resides in the endoplasmic reticulum membrane. Its subcellular location is the microsome membrane. It catalyses the reaction an organic molecule + reduced [NADPH--hemoprotein reductase] + O2 = an alcohol + oxidized [NADPH--hemoprotein reductase] + H2O + H(+). The catalysed reaction is an omega-methyl-long-chain fatty acid + reduced [NADPH--hemoprotein reductase] + O2 = an omega-hydroxy-long-chain fatty acid + oxidized [NADPH--hemoprotein reductase] + H2O + H(+). It carries out the reaction dodecanoate + reduced [NADPH--hemoprotein reductase] + O2 = 12-hydroxydodecanoate + oxidized [NADPH--hemoprotein reductase] + H2O + H(+). The enzyme catalyses tetradecanoate + reduced [NADPH--hemoprotein reductase] + O2 = 14-hydroxytetradecanoate + oxidized [NADPH--hemoprotein reductase] + H2O + H(+). It catalyses the reaction hexadecanoate + reduced [NADPH--hemoprotein reductase] + O2 = 16-hydroxyhexadecanoate + oxidized [NADPH--hemoprotein reductase] + H2O + H(+). The catalysed reaction is (9Z)-octadecenoate + reduced [NADPH--hemoprotein reductase] + O2 = 18-hydroxy-(9Z)-octadecenoate + oxidized [NADPH--hemoprotein reductase] + H2O + H(+). It carries out the reaction (5Z,8Z,11Z,14Z)-eicosatetraenoate + reduced [NADPH--hemoprotein reductase] + O2 = 20-hydroxy-(5Z,8Z,11Z,14Z)-eicosatetraenoate + oxidized [NADPH--hemoprotein reductase] + H2O + H(+). The enzyme catalyses 22-hydroxydocosanoate + reduced [NADPH--hemoprotein reductase] + O2 = 22-oxodocosanoate + oxidized [NADPH--hemoprotein reductase] + 2 H2O + H(+). It catalyses the reaction 22-oxodocosanoate + reduced [NADPH--hemoprotein reductase] + O2 = docosanedioate + oxidized [NADPH--hemoprotein reductase] + H2O + 2 H(+). The catalysed reaction is (9R,10S)-epoxy-octadecanoate + reduced [NADPH--hemoprotein reductase] + O2 = 18-hydroxy-(9R,10S)-epoxy-octadecanoate + oxidized [NADPH--hemoprotein reductase] + H2O + H(+). It carries out the reaction 3-hydroxyhexadecanoate + reduced [NADPH--hemoprotein reductase] + O2 = 3,16-dihydroxyhexadecanoate + oxidized [NADPH--hemoprotein reductase] + H2O + H(+). The protein operates within lipid metabolism; arachidonate metabolism. Its pathway is lipid metabolism; oxylipin biosynthesis. Its activity is regulated as follows. Activated by cytochrome b5. A cytochrome P450 monooxygenase involved in the metabolism of fatty acids and their oxygenated derivatives (oxylipins). Mechanistically, uses molecular oxygen inserting one oxygen atom into a substrate, and reducing the second into a water molecule, with two electrons provided by NADPH via cytochrome P450 reductase (CPR; NADPH-ferrihemoprotein reductase). Catalyzes predominantly the oxidation of the terminal carbon (omega-oxidation) of saturated and unsaturated fatty acids, the catalytic efficiency decreasing in the following order: dodecanoic &gt; tetradecanoic &gt; (9Z)-octadecenoic &gt; (9Z,12Z)-octadecadienoic &gt; hexadecanoic acid. Acts as a major omega-hydroxylase for dodecanoic (lauric) acid in liver. Participates in omega-hydroxylation of (5Z,8Z,11Z,14Z)-eicosatetraenoic acid (arachidonate) to 20-hydroxyeicosatetraenoic acid (20-HETE), a signaling molecule acting both as vasoconstrictive and natriuretic with overall effect on arterial blood pressure. Can also catalyze the oxidation of the penultimate carbon (omega-1 oxidation) of fatty acids with lower efficiency. May contribute to the degradation of saturated very long-chain fatty acids (VLCFAs) such as docosanoic acid, by catalyzing successive omega-oxidations to the corresponding dicarboxylic acid, thereby initiating chain shortening. Omega-hydroxylates (9R,10S)-epoxy-octadecanoate stereoisomer. Plays a minor role in omega-oxidation of long-chain 3-hydroxy fatty acids. Has little activity toward prostaglandins A1 and E1. The protein is Cytochrome P450 4A11 of Homo sapiens (Human).